Consider the following 176-residue polypeptide: NADH:riboflavin 5'-phosphate oxidoreductase (176 aa).

In terms of biological role, provides the reduced form of flavin mononucleotide for the PIIA synthase reaction. This Streptomyces pristinaespiralis protein is NADH:riboflavin 5'-phosphate oxidoreductase (snaC).